The sequence spans 883 residues: Phosphoenolpyruvate carboxylase (883 aa).

Active-site residues include His138 and Lys546.

Belongs to the PEPCase type 1 family. Requires Mg(2+) as cofactor.

The catalysed reaction is oxaloacetate + phosphate = phosphoenolpyruvate + hydrogencarbonate. Forms oxaloacetate, a four-carbon dicarboxylic acid source for the tricarboxylic acid cycle. The protein is Phosphoenolpyruvate carboxylase of Erwinia tasmaniensis (strain DSM 17950 / CFBP 7177 / CIP 109463 / NCPPB 4357 / Et1/99).